A 403-amino-acid chain; its full sequence is D-mannonate dehydratase Caul1427 (403 aa).

Positions 38 and 123 each coordinate substrate. Tyr160 functions as the Proton donor/acceptor in the catalytic mechanism. Residue Asp211 coordinates Mg(2+). The Proton donor/acceptor role is filled by His213. Positions 237 and 263 each coordinate Mg(2+). 5 residues coordinate substrate: Glu263, Arg284, His313, Asp317, and Glu340.

Belongs to the mandelate racemase/muconate lactonizing enzyme family. GalD subfamily. Mg(2+) is required as a cofactor.

It catalyses the reaction D-mannonate = 2-dehydro-3-deoxy-D-gluconate + H2O. The protein operates within carbohydrate metabolism; pentose and glucuronate interconversion. Its function is as follows. Catalyzes the dehydration of D-mannonate. Has no detectable activity with a panel of 70 other acid sugars (in vitro). In Caulobacter sp. (strain K31), this protein is D-mannonate dehydratase Caul1427.